A 939-amino-acid polypeptide reads, in one-letter code: Translation initiation factor IF-2 (939 aa).

Disordered stretches follow at residues 51–81 (LGTK…GGKK) and 137–353 (VTNK…EMKA). Residues 181–210 (NEKKAGAPEIKRAEHTETVEKSKTAVDSKK) are compositionally biased toward basic and acidic residues. Low complexity predominate over residues 259–277 (PVNRSPRPSTPSPNRSAGG). Over residues 300 to 312 (RRDEKPAERDSRP) the composition is skewed to basic and acidic residues. The tr-type G domain maps to 437 to 606 (GRCPVVTVMG…QLAAEMLELK (170 aa)). Residues 446–453 (GHVDHGKT) form a G1 region. 446 to 453 (GHVDHGKT) is a GTP binding site. The G2 stretch occupies residues 471–475 (GITQH). The interval 492 to 495 (DTPG) is G3. Residues 492–496 (DTPGH) and 546–549 (NKID) contribute to the GTP site. Positions 546 to 549 (NKID) are G4. Residues 582–584 (SAK) form a G5 region.

The protein belongs to the TRAFAC class translation factor GTPase superfamily. Classic translation factor GTPase family. IF-2 subfamily.

It is found in the cytoplasm. Its function is as follows. One of the essential components for the initiation of protein synthesis. Protects formylmethionyl-tRNA from spontaneous hydrolysis and promotes its binding to the 30S ribosomal subunits. Also involved in the hydrolysis of GTP during the formation of the 70S ribosomal complex. The sequence is that of Translation initiation factor IF-2 from Desulfotalea psychrophila (strain LSv54 / DSM 12343).